The chain runs to 78 residues: Cytochrome c oxidase subunit 8, mitochondrial (78 aa).

A mitochondrion-targeting transit peptide spans 1–27 (MLCQQMIRTTAKRSSNIMTRPIIMKRS). Residues 28-51 (VHFKDGVYENIPFKVKGRKTPYAL) lie on the Mitochondrial matrix side of the membrane. The chain crosses the membrane as a helical span at residues 52-73 (SHFGFFAIGFAVPFVACYVQLK). A topological domain (mitochondrial intermembrane) is located at residue lysine 74. The propeptide occupies 75-78 (SGAF).

It belongs to the cytochrome c oxidase VIIc family. In terms of assembly, component of the cytochrome c oxidase (complex IV, CIV), a multisubunit enzyme composed of 12 subunits. The complex is composed of a catalytic core of 3 subunits COX1, COX2 and COX3, encoded in the mitochondrial DNA, and 9 supernumerary subunits COX4, COX5A (or COX5B), COX6, COX7, COX8, COX9, COX12, COX13 and COX26, which are encoded in the nuclear genome. The complex exists as a monomer or a dimer and forms supercomplexes (SCs) in the inner mitochondrial membrane with a dimer of ubiquinol-cytochrome c oxidoreductase (cytochrome b-c1 complex, complex III, CIII), resulting in 2 different assemblies (supercomplexes III(2)IV and III(2)IV(2)).

The protein resides in the mitochondrion inner membrane. The protein operates within energy metabolism; oxidative phosphorylation. In terms of biological role, component of the cytochrome c oxidase, the last enzyme in the mitochondrial electron transport chain which drives oxidative phosphorylation. The respiratory chain contains 3 multisubunit complexes succinate dehydrogenase (complex II, CII), ubiquinol-cytochrome c oxidoreductase (cytochrome b-c1 complex, complex III, CIII) and cytochrome c oxidase (complex IV, CIV), that cooperate to transfer electrons derived from NADH and succinate to molecular oxygen, creating an electrochemical gradient over the inner membrane that drives transmembrane transport and the ATP synthase. Cytochrome c oxidase is the component of the respiratory chain that catalyzes the reduction of oxygen to water. Electrons originating from reduced cytochrome c in the intermembrane space (IMS) are transferred via the dinuclear copper A center (CU(A)) of COX2 and heme A of COX1 to the active site in COX1, a binuclear center (BNC) formed by heme A3 and copper B (CU(B)). The BNC reduces molecular oxygen to 2 water molecules using 4 electrons from cytochrome c in the IMS and 4 protons from the mitochondrial matrix. This Saccharomyces cerevisiae (strain ATCC 204508 / S288c) (Baker's yeast) protein is Cytochrome c oxidase subunit 8, mitochondrial (COX8).